The chain runs to 559 residues: Suppressor of tumorigenicity 7 protein-like (559 aa).

3 consecutive transmembrane segments (helical) span residues 39 to 59 (GLAN…LYAL), 83 to 103 (FYVA…IFEW), and 513 to 533 (LPFF…IALL).

Belongs to the ST7 family.

The protein localises to the membrane. This Rattus norvegicus (Rat) protein is Suppressor of tumorigenicity 7 protein-like (St7l).